Reading from the N-terminus, the 331-residue chain is Tetraacyldisaccharide 4'-kinase (331 aa).

Position 55-62 (threonine 55–threonine 62) interacts with ATP.

Belongs to the LpxK family.

It catalyses the reaction a lipid A disaccharide + ATP = a lipid IVA + ADP + H(+). The protein operates within glycolipid biosynthesis; lipid IV(A) biosynthesis; lipid IV(A) from (3R)-3-hydroxytetradecanoyl-[acyl-carrier-protein] and UDP-N-acetyl-alpha-D-glucosamine: step 6/6. Transfers the gamma-phosphate of ATP to the 4'-position of a tetraacyldisaccharide 1-phosphate intermediate (termed DS-1-P) to form tetraacyldisaccharide 1,4'-bis-phosphate (lipid IVA). The polypeptide is Tetraacyldisaccharide 4'-kinase (Edwardsiella ictaluri (strain 93-146)).